The sequence spans 277 residues: Undecaprenyl-diphosphatase (277 aa).

6 helical membrane passes run 47–67 (FNII…RGKI), 85–105 (ANLL…ADLI), 108–128 (WLFN…VMLW), 187–207 (FSFF…GYVY), 218–238 (VFAV…RALL), and 249–269 (FAWY…FHLI).

It belongs to the UppP family.

Its subcellular location is the cell inner membrane. The enzyme catalyses di-trans,octa-cis-undecaprenyl diphosphate + H2O = di-trans,octa-cis-undecaprenyl phosphate + phosphate + H(+). In terms of biological role, catalyzes the dephosphorylation of undecaprenyl diphosphate (UPP). Confers resistance to bacitracin. In Pseudomonas aeruginosa (strain ATCC 15692 / DSM 22644 / CIP 104116 / JCM 14847 / LMG 12228 / 1C / PRS 101 / PAO1), this protein is Undecaprenyl-diphosphatase.